The following is a 143-amino-acid chain: Ribonuclease P protein component 2 (143 aa).

Belongs to the eukaryotic/archaeal RNase P protein component 2 family. As to quaternary structure, consists of a catalytic RNA component and at least 4-5 protein subunits.

It is found in the cytoplasm. The catalysed reaction is Endonucleolytic cleavage of RNA, removing 5'-extranucleotides from tRNA precursor.. Functionally, part of ribonuclease P, a protein complex that generates mature tRNA molecules by cleaving their 5'-ends. This is Ribonuclease P protein component 2 from Saccharolobus islandicus (strain Y.N.15.51 / Yellowstone #2) (Sulfolobus islandicus).